A 362-amino-acid chain; its full sequence is Fructose-bisphosphate aldolase (362 aa).

Serine 65 serves as a coordination point for D-glyceraldehyde 3-phosphate. Aspartate 112 serves as the catalytic Proton donor. The Zn(2+) site is built by histidine 113, aspartate 147, glutamate 177, and histidine 229. Glycine 230 contacts dihydroxyacetone phosphate. Histidine 268 is a Zn(2+) binding site. Dihydroxyacetone phosphate-binding positions include 269–271 (GGS) and 290–293 (NVDT).

Belongs to the class II fructose-bisphosphate aldolase family. Homodimer. The cofactor is Zn(2+).

It catalyses the reaction beta-D-fructose 1,6-bisphosphate = D-glyceraldehyde 3-phosphate + dihydroxyacetone phosphate. It participates in carbohydrate degradation; glycolysis; D-glyceraldehyde 3-phosphate and glycerone phosphate from D-glucose: step 4/4. Its function is as follows. Catalyzes the aldol condensation of dihydroxyacetone phosphate (DHAP or glycerone-phosphate) with glyceraldehyde 3-phosphate (G3P) to form fructose 1,6-bisphosphate (FBP) in gluconeogenesis and the reverse reaction in glycolysis. The sequence is that of Fructose-bisphosphate aldolase (fbaA) from Aspergillus oryzae (strain ATCC 42149 / RIB 40) (Yellow koji mold).